A 248-amino-acid polypeptide reads, in one-letter code: NH(3)-dependent NAD(+) synthetase (248 aa).

Residue 30 to 37 (GLSGGIDS) coordinates ATP. Asp-36 contributes to the Mg(2+) binding site. Residue Arg-114 participates in deamido-NAD(+) binding. Thr-134 provides a ligand contact to ATP. A Mg(2+)-binding site is contributed by Glu-139. Deamido-NAD(+)-binding residues include Lys-147 and Asp-154. 2 residues coordinate ATP: Lys-163 and Thr-185. 232 to 233 (HK) contributes to the deamido-NAD(+) binding site.

Belongs to the NAD synthetase family. Homodimer.

It catalyses the reaction deamido-NAD(+) + NH4(+) + ATP = AMP + diphosphate + NAD(+) + H(+). Its pathway is cofactor biosynthesis; NAD(+) biosynthesis; NAD(+) from deamido-NAD(+) (ammonia route): step 1/1. Functionally, catalyzes the ATP-dependent amidation of deamido-NAD to form NAD. Uses ammonia as a nitrogen source. The chain is NH(3)-dependent NAD(+) synthetase from Mycoplasma genitalium (strain ATCC 33530 / DSM 19775 / NCTC 10195 / G37) (Mycoplasmoides genitalium).